Here is a 464-residue protein sequence, read N- to C-terminus: Sensor histidine kinase Hik34 (464 aa).

Positions 235–449 (ALTHEVRTPL…ILTIYLKCEQ (215 aa)) constitute a Histidine kinase domain. His238 is modified (phosphohistidine; by autocatalysis).

When expressed in E.coli autophosphorylates at 18 to 30 degrees Celsius; less phosphorylation occurs at 36 and none occurs at 42 or 48 degrees Celsius.

The enzyme catalyses ATP + protein L-histidine = ADP + protein N-phospho-L-histidine.. Functionally, member of a two-component system Hik34/Rre1, controlling expression of at least 20 genes in response to hyperosmotic stress (0.5 M sorbitol) or salt (0.5 M NaCl). Represses expression of heat shock genes under normal growth conditions. Required for survival of long-term heat shock exposure. In Synechocystis sp. (strain ATCC 27184 / PCC 6803 / Kazusa), this protein is Sensor histidine kinase Hik34.